Consider the following 158-residue polypeptide: 2-C-methyl-D-erythritol 2,4-cyclodiphosphate synthase (158 aa).

A divalent metal cation-binding residues include D9 and H11. 4-CDP-2-C-methyl-D-erythritol 2-phosphate-binding positions include 9 to 11 (DVH) and 35 to 36 (HS). Position 43 (H43) interacts with a divalent metal cation. 4-CDP-2-C-methyl-D-erythritol 2-phosphate-binding positions include 57–59 (DIG), 62–66 (FPDTD), 101–107 (AQKPKMA), 133–136 (TTTE), F140, and R143.

Belongs to the IspF family. In terms of assembly, homotrimer. Requires a divalent metal cation as cofactor.

The catalysed reaction is 4-CDP-2-C-methyl-D-erythritol 2-phosphate = 2-C-methyl-D-erythritol 2,4-cyclic diphosphate + CMP. It functions in the pathway isoprenoid biosynthesis; isopentenyl diphosphate biosynthesis via DXP pathway; isopentenyl diphosphate from 1-deoxy-D-xylulose 5-phosphate: step 4/6. Its function is as follows. Involved in the biosynthesis of isopentenyl diphosphate (IPP) and dimethylallyl diphosphate (DMAPP), two major building blocks of isoprenoid compounds. Catalyzes the conversion of 4-diphosphocytidyl-2-C-methyl-D-erythritol 2-phosphate (CDP-ME2P) to 2-C-methyl-D-erythritol 2,4-cyclodiphosphate (ME-CPP) with a corresponding release of cytidine 5-monophosphate (CMP). The sequence is that of 2-C-methyl-D-erythritol 2,4-cyclodiphosphate synthase from Bacillus pumilus (strain SAFR-032).